A 220-amino-acid polypeptide reads, in one-letter code: Lactate utilization protein C (220 aa).

The protein belongs to the LutC/YkgG family.

Is involved in L-lactate degradation and allows cells to grow with lactate as the sole carbon source. This is Lactate utilization protein C from Anoxybacillus flavithermus (strain DSM 21510 / WK1).